Reading from the N-terminus, the 869-residue chain is Alanine--tRNA ligase (869 aa).

Histidine 559, histidine 563, cysteine 660, and histidine 664 together coordinate Zn(2+).

Belongs to the class-II aminoacyl-tRNA synthetase family. It depends on Zn(2+) as a cofactor.

The protein resides in the cytoplasm. It carries out the reaction tRNA(Ala) + L-alanine + ATP = L-alanyl-tRNA(Ala) + AMP + diphosphate. Catalyzes the attachment of alanine to tRNA(Ala) in a two-step reaction: alanine is first activated by ATP to form Ala-AMP and then transferred to the acceptor end of tRNA(Ala). Also edits incorrectly charged Ser-tRNA(Ala) and Gly-tRNA(Ala) via its editing domain. The chain is Alanine--tRNA ligase from Janthinobacterium sp. (strain Marseille) (Minibacterium massiliensis).